Reading from the N-terminus, the 363-residue chain is MKIKVLLAVALLAMTVPVKAERIKDIAAVQGVRSNQLIGYGLVVGLPGTGEKANYTEQTFTTMLKNFGINLPTNVKPKIKNVAVVAVHADMPPFIKPGQTLDVTVSSIGEAKSLRGGTLLQTFLKGVDGNIYAIAQGSMVVSGFSAEGLDGSKVIQNTPTVGRIPNGALVERAVPSAFAHGDFLTFNLHRADFSTAKRMADAINDLLGPEMARALDAASVQVYAPRDASQRVSFLATLENVEVEPADESAKVIVNSRTGTIVVGQNVKLLPAAVTHGGLTVTIAENQQVSQPNALAGGDTVVTNQSTIDASQANSRMFLFNPGTSLDELVRAVNLVGAAPSDVLAILEALKMAGALHGELIVI.

The N-terminal stretch at 1–20 is a signal peptide; the sequence is MKIKVLLAVALLAMTVPVKA.

This sequence belongs to the FlgI family. As to quaternary structure, the basal body constitutes a major portion of the flagellar organelle and consists of four rings (L,P,S, and M) mounted on a central rod.

The protein resides in the periplasm. Its subcellular location is the bacterial flagellum basal body. Functionally, assembles around the rod to form the L-ring and probably protects the motor/basal body from shearing forces during rotation. This is Flagellar P-ring protein from Shewanella amazonensis (strain ATCC BAA-1098 / SB2B).